We begin with the raw amino-acid sequence, 137 residues long: MRILGLDIGNKTIGVALSDPLGITAQGITTIKRKGEDRDIEELKAICDKYKVEVIVCGLPKNMNGTLGPQSEKVLKFCNIIEEVINLPIKMWDERLTTVAANKAMLEADLSRAKRKKIVDKMAATYILQGYLDRISK.

This sequence belongs to the YqgF nuclease family.

The protein resides in the cytoplasm. Could be a nuclease involved in processing of the 5'-end of pre-16S rRNA. The polypeptide is Putative pre-16S rRNA nuclease (Clostridium kluyveri (strain NBRC 12016)).